The sequence spans 1261 residues: MDGPTRGHGLRKKRRSRSQRDRERRSRAGLGTGAAGGIGAGRTRAPSLASSSGSDKEDNGKPPSSAPSRPRPPRRKRRESTSAEEDIIDGFAMTSFVTFEALEKDVAVKPQERAEKRQTPLTKKKREALTNGLSFHSKKSRLSHSHHYSSDRENDRNLCQHLGKRKKMPKGLRQLKPGQNSCRDSDSESASGESKGFQRSSSRERLSDSSAPSSLGTGYFCDSDSDQEEKASDASSEKLFNTVLVNKDPELGVGALPEHNQDAGPIVPKISGLERSQEKSQDCCKEPVFEPVVLKDPHPQLPQLPSQAQAEPQLQIPSPGPDLVPRTEAPPQFPPPSTQPAQGPPEAQLQPAPLPQVQQRPPRPQSPSHLLQQTLPPVQSHPSSQSLSQPLSAYNSSSLSLNSLSSRSSTPAKTQPAPPHISHHPSASPFPLSLPNHSPLHSFTPTLQPPAHSHHPNMFAPPTALPPPPPLTSGSLQVPGHPAGSTYSEQDILRQELNTRFLASQSADRGASLGPPPYLRTEFHQHQHQHQHTHQHTHQHTFTPFPHAIPPTAIMPTPAPPMFDKYPTKVDPFYRHSLFHSYPPAVSGIPPMIPPTGPFGSLQGAFQPKTSNPIDVAARPGTVPHTLLQKDPRLTDPFRPMLRKPGKWCAMHVHIAWQIYHHQQKVKKQMQSDPHKLDFGLKPEFLSRPPGPSLFGAIHHPHDLARPSTLFSAAGAAHPTGTPFGPPPHHSNFLNPAAHLEPFNRPSTFTGLAAVGGNAFGGLGNPSVTPNSVFGHKDSPSVQNFSNPHEPWNRLHRTPPSFPTPPPWLKPGELERSASAAAHDRDRDVDKRDSSVSKDDKERESVEKRHPSHPSPAPPVPVSALGHNRSSTDPTTRGHLNTEAREKDKPKEKERDHSGSRKDLTTEEHKAKESHLPERDGHSHEGRAAGEEPKQLSRVPSPYVRTPGVDSTRPNSTSSREAEPRKGEPAYENPKKNAEVKVKEERKEDHDLPTEAPQAHRTSEAPPPSSSASASVHPGPLASMPMTVGVTGIHAMNSIGSLDRTRMVTPFMGLSPIPGGERFPYPSFHWDPMRDPLRDPYRDLDMHRRDPLGRDFLLRNDPLHRLSTPRLYEADRSFRDREPHDYSHHHHHHHHPLAVDPRREHERGGHLDERERLHVLREDYEHPRLHPVHPASLDGHLPHPSLLTPGLPSMHYPRISPTAGHQNGLLNKTPPTAALSAPPPLISTLGGRPGSPRRTTPLSAEIRERPPSHTLKDIEAR.

6 disordered regions span residues 1 to 88 (MDGP…EDII), 105 to 236 (DVAV…DASS), 251 to 486 (LGVG…AGST), 505 to 545 (QSAD…FTPF), 771 to 1023 (NSVF…PLAS), and 1121 to 1148 (REPHDYSHHHHHHHHPLAVDPRREHERG). Basic residues predominate over residues 8–17 (HGLRKKRRSR). The span at 30-40 (LGTGAAGGIGA) shows a compositional bias: gly residues. Basic and acidic residues predominate over residues 105–118 (DVAVKPQERAEKRQ). Over residues 136 to 147 (HSKKSRLSHSHH) the composition is skewed to basic residues. Over residues 148 to 158 (YSSDRENDRNL) the composition is skewed to basic and acidic residues. Residues 177 to 192 (PGQNSCRDSDSESASG) show a composition bias toward polar residues. The span at 275 to 298 (RSQEKSQDCCKEPVFEPVVLKDPH) shows a compositional bias: basic and acidic residues. Residues 288 to 471 (VFEPVVLKDP…PTALPPPPPL (184 aa)) form an important for regulation of lamellipodia formation region. Composition is skewed to low complexity over residues 301–315 (LPQLPSQAQAEPQLQ) and 339–409 (QPAQ…SRSS). Residues 435–446 (PNHSPLHSFTPT) are compositionally biased toward polar residues. Basic residues predominate over residues 526–539 (HQHQHQHTHQHTHQ). Pro residues predominate over residues 800 to 809 (PSFPTPPPWL). Residues 812–849 (GELERSASAAAHDRDRDVDKRDSSVSKDDKERESVEKR) are compositionally biased toward basic and acidic residues. Over residues 868-879 (NRSSTDPTTRGH) the composition is skewed to polar residues. Composition is skewed to basic and acidic residues over residues 880 to 935 (LNTE…EPKQ) and 960 to 993 (REAEPRKGEPAYENPKKNAEVKVKEERKEDHDLP). A compositionally biased stretch (basic residues) spans 1127–1136 (SHHHHHHHHP). Ser-1200 and Ser-1235 each carry phosphoserine. Residues 1201–1261 (PTAGHQNGLL…SHTLKDIEAR (61 aa)) are disordered. Over residues 1245-1261 (EIRERPPSHTLKDIEAR) the composition is skewed to basic and acidic residues.

The protein belongs to the AUTS2 family. Component of a PRC1-like complex that contains PCGF5, RNF2, CSNK2B, RYBP and AUTS2. Within this complex, interacts directly with PCGF5 and CSNK2B. Interacts with the histone acetyltransferase EP300/p300. Interacts (via Pro-rich region) with PREX1, DOCK1 and ELMO2. Detected in brain cortex in embryo, neonates and adults (at protein level). Detected in embryonic and adult Purkinje cells in the cerebellum. Detected in dorsal thalamus and in dopaminergic neurons in substantia nigra.

The protein resides in the nucleus. It is found in the cytoplasm. Its subcellular location is the cytoskeleton. The protein localises to the cell projection. It localises to the growth cone. In terms of biological role, component of a Polycomb group (PcG) multiprotein PRC1-like complex, a complex class required to maintain the transcriptionally repressive state of many genes, including Hox genes, throughout development. PcG PRC1 complex acts via chromatin remodeling and modification of histones; it mediates monoubiquitination of histone H2A 'Lys-119', rendering chromatin heritably changed in its expressibility. The PRC1-like complex that contains PCGF5, RNF2, CSNK2B, RYBP and AUTS2 has decreased histone H2A ubiquitination activity, due to the phosphorylation of RNF2 by CSNK2B. As a consequence, the complex mediates transcriptional activation. In the cytoplasm, plays a role in axon and dendrite elongation and in neuronal migration during embryonic brain development. Promotes reorganization of the actin cytoskeleton, lamellipodia formation and neurite elongation via its interaction with RAC guanine nucleotide exchange factors, which then leads to the activation of RAC1. The protein is Autism susceptibility gene 2 protein homolog (Auts2) of Mus musculus (Mouse).